The sequence spans 320 residues: ATP-dependent 6-phosphofructokinase (320 aa).

Glycine 12 provides a ligand contact to ATP. 22–26 (RGVVR) lines the ADP pocket. ATP-binding positions include 73 to 74 (RF) and 103 to 106 (GDGS). A Mg(2+)-binding site is contributed by aspartate 104. 126-128 (TID) contacts substrate. Aspartate 128 functions as the Proton acceptor in the catalytic mechanism. Arginine 155 is an ADP binding site. Substrate contacts are provided by residues arginine 163 and 170–172 (MGR). Residues 186–188 (GCE), lysine 212, and 214–216 (KKH) each bind ADP. Residues glutamate 223, arginine 244, and 250-253 (HIQR) each bind substrate.

Belongs to the phosphofructokinase type A (PFKA) family. ATP-dependent PFK group I subfamily. Prokaryotic clade 'B1' sub-subfamily. In terms of assembly, homotetramer. Requires Mg(2+) as cofactor.

The protein resides in the cytoplasm. The enzyme catalyses beta-D-fructose 6-phosphate + ATP = beta-D-fructose 1,6-bisphosphate + ADP + H(+). It participates in carbohydrate degradation; glycolysis; D-glyceraldehyde 3-phosphate and glycerone phosphate from D-glucose: step 3/4. With respect to regulation, allosterically activated by ADP and other diphosphonucleosides, and allosterically inhibited by phosphoenolpyruvate. Its function is as follows. Catalyzes the phosphorylation of D-fructose 6-phosphate to fructose 1,6-bisphosphate by ATP, the first committing step of glycolysis. The protein is ATP-dependent 6-phosphofructokinase of Vibrio campbellii (strain ATCC BAA-1116).